Consider the following 377-residue polypeptide: Hydrogenase maturation factor HypD (377 aa).

Fe cation is bound by residues Cys-41, Cys-69, and Cys-72.

Belongs to the HypD family. Requires [4Fe-4S] cluster as cofactor.

It functions in the pathway protein modification; [NiFe] hydrogenase maturation. Involved in the maturation of [NiFe] hydrogenases. Involved in the biosynthesis of the Fe(CN)(2)CO cofactor. The chain is Hydrogenase maturation factor HypD from Rhodobacter capsulatus (Rhodopseudomonas capsulata).